The following is a 246-amino-acid chain: Aliphatic sulfonates import ATP-binding protein SsuB 2 (246 aa).

An ABC transporter domain is found at 4-218; that stretch reads VTVRGLRRAF…RRDPRFEQAR (215 aa). 36–43 serves as a coordination point for ATP; the sequence is GRSGGGKT.

The protein belongs to the ABC transporter superfamily. Aliphatic sulfonates importer (TC 3.A.1.17.2) family. In terms of assembly, the complex is composed of two ATP-binding proteins (SsuB), two transmembrane proteins (SsuC) and a solute-binding protein (SsuA).

The protein resides in the cell membrane. The enzyme catalyses ATP + H2O + aliphatic sulfonate-[sulfonate-binding protein]Side 1 = ADP + phosphate + aliphatic sulfonateSide 2 + [sulfonate-binding protein]Side 1.. Functionally, part of the ABC transporter complex SsuABC involved in aliphatic sulfonates import. Responsible for energy coupling to the transport system. The polypeptide is Aliphatic sulfonates import ATP-binding protein SsuB 2 (Frankia alni (strain DSM 45986 / CECT 9034 / ACN14a)).